Here is a 796-residue protein sequence, read N- to C-terminus: Putative aconitate hydratase, mitochondrial (796 aa).

Residues 1–28 (MLRQIVSQRSAARRQLIDQLAPCLRRGL) constitute a mitochondrion transit peptide. Substrate is bound by residues Gln108 and 201-203 (DSH). [4Fe-4S] cluster-binding residues include Cys399, Cys462, and Cys465. Residues Arg489 and Arg494 each coordinate substrate. The disordered stretch occupies residues 540–569 (EPPTGQDLPSKGFEAGNPAFQPSAPVPDSS). 685 to 686 (AR) lines the substrate pocket.

It belongs to the aconitase/IPM isomerase family.

Its subcellular location is the mitochondrion. Has no detectable activity towards cis-acontiate or cis-homoaconitate. The protein is Putative aconitate hydratase, mitochondrial (acoB) of Emericella nidulans (strain FGSC A4 / ATCC 38163 / CBS 112.46 / NRRL 194 / M139) (Aspergillus nidulans).